The following is an 87-amino-acid chain: Elastase inhibitor AFLEI (87 aa).

An N-terminal signal peptide occupies residues 1–19 (MKFSLACLLALAGLQAALA). Cysteines 24 and 86 form a disulfide.

The protein localises to the secreted. In terms of biological role, elastase inhibitor. In Aspergillus fumigatus (strain CBS 144.89 / FGSC A1163 / CEA10) (Neosartorya fumigata), this protein is Elastase inhibitor AFLEI.